The following is a 508-amino-acid chain: Photosystem II CP47 reaction center protein (508 aa).

Helical transmembrane passes span 21-36 (SVHI…WAGS), 101-115 (IVFS…IWHW), 140-156 (GIHL…FGAF), 203-218 (IAAG…FHLS), 237-252 (VLSS…AFVV), and 457-472 (SFAL…HGAR).

The protein belongs to the PsbB/PsbC family. PsbB subfamily. In terms of assembly, PSII is composed of 1 copy each of membrane proteins PsbA, PsbB, PsbC, PsbD, PsbE, PsbF, PsbH, PsbI, PsbJ, PsbK, PsbL, PsbM, PsbT, PsbX, PsbY, PsbZ, Psb30/Ycf12, at least 3 peripheral proteins of the oxygen-evolving complex and a large number of cofactors. It forms dimeric complexes. Binds multiple chlorophylls. PSII binds additional chlorophylls, carotenoids and specific lipids. is required as a cofactor.

The protein resides in the plastid. It is found in the chloroplast thylakoid membrane. In terms of biological role, one of the components of the core complex of photosystem II (PSII). It binds chlorophyll and helps catalyze the primary light-induced photochemical processes of PSII. PSII is a light-driven water:plastoquinone oxidoreductase, using light energy to abstract electrons from H(2)O, generating O(2) and a proton gradient subsequently used for ATP formation. This Aethionema cordifolium (Lebanon stonecress) protein is Photosystem II CP47 reaction center protein.